A 104-amino-acid polypeptide reads, in one-letter code: Small ribosomal subunit protein uS10 (104 aa).

The protein belongs to the universal ribosomal protein uS10 family. Part of the 30S ribosomal subunit.

Its function is as follows. Involved in the binding of tRNA to the ribosomes. In Helicobacter pylori (strain P12), this protein is Small ribosomal subunit protein uS10.